A 157-amino-acid chain; its full sequence is Peptide methionine sulfoxide reductase MsrA (157 aa).

Cysteine 10 is a catalytic residue.

This sequence belongs to the MsrA Met sulfoxide reductase family.

It carries out the reaction L-methionyl-[protein] + [thioredoxin]-disulfide + H2O = L-methionyl-(S)-S-oxide-[protein] + [thioredoxin]-dithiol. It catalyses the reaction [thioredoxin]-disulfide + L-methionine + H2O = L-methionine (S)-S-oxide + [thioredoxin]-dithiol. In terms of biological role, has an important function as a repair enzyme for proteins that have been inactivated by oxidation. Catalyzes the reversible oxidation-reduction of methionine sulfoxide in proteins to methionine. In Clostridium botulinum (strain Loch Maree / Type A3), this protein is Peptide methionine sulfoxide reductase MsrA.